A 189-amino-acid polypeptide reads, in one-letter code: Probable nicotinate-nucleotide adenylyltransferase (189 aa).

It belongs to the NadD family.

It catalyses the reaction nicotinate beta-D-ribonucleotide + ATP + H(+) = deamido-NAD(+) + diphosphate. The protein operates within cofactor biosynthesis; NAD(+) biosynthesis; deamido-NAD(+) from nicotinate D-ribonucleotide: step 1/1. Catalyzes the reversible adenylation of nicotinate mononucleotide (NaMN) to nicotinic acid adenine dinucleotide (NaAD). The polypeptide is Probable nicotinate-nucleotide adenylyltransferase (Bacillus cereus (strain AH820)).